The sequence spans 286 residues: MKCIAIDLDGTLLNKESVISAENREAIKRAVDAGILVTICTGRATFDVKALLDDLDIPIIAANGGTIHDTGYRLISRTLMDQEAGKAIADYLLSKNIYFEVYTDDHLLSPFDGEAKLHAELDILKSANPNEQTDDLWQGAMTQFKQFGIKPIPHIESVFDGGENIYKLLCFSFDMDKLKQAKEELKHHKKLAQTSSGKHIIEILPASSGKGRALTKLADIYGIETQDIYAIGDSPNDLSMFEVAGHRIAMENAIDELKEKSTFVTKSNDENGVAYFIDQLLSGQYA.

Aspartate 7 functions as the Nucleophile in the catalytic mechanism. A Mg(2+)-binding site is contributed by aspartate 7. Leucine 8 is a binding site for phosphate. Residue aspartate 9 coordinates Mg(2+). Phosphate contacts are provided by residues 41-42 (TG) and lysine 210. 2 residues coordinate Mg(2+): aspartate 233 and serine 234. Asparagine 236 contributes to the phosphate binding site.

It belongs to the HAD-like hydrolase superfamily. Cof family. Mg(2+) is required as a cofactor.

It carries out the reaction 5-amino-6-(5-phospho-D-ribitylamino)uracil + H2O = 5-amino-6-(D-ribitylamino)uracil + phosphate. Its pathway is cofactor biosynthesis; riboflavin biosynthesis; 5-amino-6-(D-ribitylamino)uracil from GTP: step 4/4. Its function is as follows. Catalyzes the dephosphorylation of the riboflavin precursor 5-amino-6-(5-phospho-D-ribitylamino)uracil and of flavin mononucleotide (FMN) in vitro. Also catalyzes the dephosphorylation of phosphorylated 5-6 carbon sugars and monophosphate nucleotides (NMP) in vitro. This Bacillus subtilis (strain 168) protein is 5-amino-6-(5-phospho-D-ribitylamino)uracil phosphatase YwtE (ywtE).